A 135-amino-acid polypeptide reads, in one-letter code: Large ribosomal subunit protein uL16c (135 aa).

Belongs to the universal ribosomal protein uL16 family. Part of the 50S ribosomal subunit.

It is found in the plastid. The protein resides in the chloroplast. In Aethionema cordifolium (Lebanon stonecress), this protein is Large ribosomal subunit protein uL16c.